The following is a 166-amino-acid chain: Large ribosomal subunit protein uL10 (166 aa).

This sequence belongs to the universal ribosomal protein uL10 family. As to quaternary structure, part of the ribosomal stalk of the 50S ribosomal subunit. The N-terminus interacts with L11 and the large rRNA to form the base of the stalk. The C-terminus forms an elongated spine to which L12 dimers bind in a sequential fashion forming a multimeric L10(L12)X complex.

Its function is as follows. Forms part of the ribosomal stalk, playing a central role in the interaction of the ribosome with GTP-bound translation factors. The sequence is that of Large ribosomal subunit protein uL10 from Pseudomonas fluorescens (strain ATCC BAA-477 / NRRL B-23932 / Pf-5).